Here is a 186-residue protein sequence, read N- to C-terminus: Large ribosomal subunit protein uL5m (186 aa).

It belongs to the universal ribosomal protein uL5 family.

The protein resides in the mitochondrion. This chain is Large ribosomal subunit protein uL5m (RPL5), found in Solanum tuberosum (Potato).